Reading from the N-terminus, the 188-residue chain is Crossover junction endodeoxyribonuclease RuvC (188 aa).

Residues Asp7, Glu68, and Asp141 contribute to the active site. Residues Asp7, Glu68, and Asp141 each contribute to the Mg(2+) site.

The protein belongs to the RuvC family. As to quaternary structure, homodimer which binds Holliday junction (HJ) DNA. The HJ becomes 2-fold symmetrical on binding to RuvC with unstacked arms; it has a different conformation from HJ DNA in complex with RuvA. In the full resolvosome a probable DNA-RuvA(4)-RuvB(12)-RuvC(2) complex forms which resolves the HJ. Requires Mg(2+) as cofactor.

The protein resides in the cytoplasm. It catalyses the reaction Endonucleolytic cleavage at a junction such as a reciprocal single-stranded crossover between two homologous DNA duplexes (Holliday junction).. Its function is as follows. The RuvA-RuvB-RuvC complex processes Holliday junction (HJ) DNA during genetic recombination and DNA repair. Endonuclease that resolves HJ intermediates. Cleaves cruciform DNA by making single-stranded nicks across the HJ at symmetrical positions within the homologous arms, yielding a 5'-phosphate and a 3'-hydroxyl group; requires a central core of homology in the junction. The consensus cleavage sequence is 5'-(A/T)TT(C/G)-3'. Cleavage occurs on the 3'-side of the TT dinucleotide at the point of strand exchange. HJ branch migration catalyzed by RuvA-RuvB allows RuvC to scan DNA until it finds its consensus sequence, where it cleaves and resolves the cruciform DNA. This is Crossover junction endodeoxyribonuclease RuvC from Mycobacterium leprae (strain TN).